The following is a 276-amino-acid chain: NADPH-dependent 7-cyano-7-deazaguanine reductase (276 aa).

80–82 (VES) provides a ligand contact to substrate. 82-83 (SK) provides a ligand contact to NADPH. Cysteine 183 acts as the Thioimide intermediate in catalysis. Residue aspartate 190 is the Proton donor of the active site. 222-223 (HE) is a substrate binding site. An NADPH-binding site is contributed by 251–252 (RG).

Belongs to the GTP cyclohydrolase I family. QueF type 2 subfamily. As to quaternary structure, homodimer.

The protein resides in the cytoplasm. It catalyses the reaction 7-aminomethyl-7-carbaguanine + 2 NADP(+) = 7-cyano-7-deazaguanine + 2 NADPH + 3 H(+). It participates in tRNA modification; tRNA-queuosine biosynthesis. In terms of biological role, catalyzes the NADPH-dependent reduction of 7-cyano-7-deazaguanine (preQ0) to 7-aminomethyl-7-deazaguanine (preQ1). The sequence is that of NADPH-dependent 7-cyano-7-deazaguanine reductase from Burkholderia cenocepacia (strain HI2424).